The chain runs to 375 residues: Chaperone protein DnaJ (375 aa).

The J domain occupies 5 to 69 (DYYEILGIDK…QKRAQYDQFG (65 aa)). The CR-type zinc-finger motif lies at 131-213 (GKETDIEIPK…CGGSGTVQKN (83 aa)). Zn(2+)-binding residues include Cys144, Cys147, Cys161, Cys164, Cys187, Cys190, Cys201, and Cys204. 4 CXXCXGXG motif repeats span residues 144–151 (CDTCNGSG), 161–168 (CSHCHGSG), 187–194 (CNYCQGTG), and 201–208 (CNTCGGSG).

Belongs to the DnaJ family. As to quaternary structure, homodimer. Zn(2+) is required as a cofactor.

Its subcellular location is the cytoplasm. Functionally, participates actively in the response to hyperosmotic and heat shock by preventing the aggregation of stress-denatured proteins and by disaggregating proteins, also in an autonomous, DnaK-independent fashion. Unfolded proteins bind initially to DnaJ; upon interaction with the DnaJ-bound protein, DnaK hydrolyzes its bound ATP, resulting in the formation of a stable complex. GrpE releases ADP from DnaK; ATP binding to DnaK triggers the release of the substrate protein, thus completing the reaction cycle. Several rounds of ATP-dependent interactions between DnaJ, DnaK and GrpE are required for fully efficient folding. Also involved, together with DnaK and GrpE, in the DNA replication of plasmids through activation of initiation proteins. The polypeptide is Chaperone protein DnaJ (Oceanobacillus iheyensis (strain DSM 14371 / CIP 107618 / JCM 11309 / KCTC 3954 / HTE831)).